The primary structure comprises 106 residues: Large ribosomal subunit protein bL21 (106 aa).

Belongs to the bacterial ribosomal protein bL21 family. As to quaternary structure, part of the 50S ribosomal subunit. Contacts protein L20.

Its function is as follows. This protein binds to 23S rRNA in the presence of protein L20. This is Large ribosomal subunit protein bL21 from Syntrophobacter fumaroxidans (strain DSM 10017 / MPOB).